The primary structure comprises 390 residues: Matrix metalloproteinase-23 (390 aa).

The Cytoplasmic segment spans residues 1 to 19 (MGRGARVPSEAPGAGVERR). Positions 1–78 (MGRGARVPSE…PGPLAPRRRR (78 aa)) are excised as a propeptide. A helical; Signal-anchor for type II membrane protein transmembrane segment spans residues 20 to 40 (WLGAALVALCLLPALVLLARL). The Lumenal segment spans residues 41-390 (GAPAVPAWSA…TYSWRVRVRG (350 aa)). Asn-92 and Asn-148 each carry an N-linked (GlcNAc...) asparagine glycan. His-211 contacts Zn(2+). The active site involves Glu-212. Residues His-215 and His-221 each contribute to the Zn(2+) site. N-linked (GlcNAc...) asparagine glycosylation occurs at Asn-232. Positions 255–289 (CLDRLFVCASWARRGFCDARRRLMKRLCPSSCDFC) constitute a ShKT domain. Intrachain disulfides connect Cys-255-Cys-289, Cys-262-Cys-282, and Cys-271-Cys-286. The region spanning 295–380 (PTVATTPPPP…VVRRQQRVLT (86 aa)) is the Ig-like C2-type domain. N-linked (GlcNAc...) asparagine glycosylation occurs at Asn-316. A disulfide bridge connects residues Cys-321 and Cys-370.

The protein belongs to the peptidase M10A family. The cofactor is Zn(2+). N-glycosylated. Post-translationally, proteolytic cleavage might yield an active form. In terms of tissue distribution, predominantly expressed in ovary, testis and prostate.

It is found in the endoplasmic reticulum membrane. The protein resides in the membrane. With respect to regulation, inhibited by TIMP2. Protease. May regulate the surface expression of some potassium channels by retaining them in the endoplasmic reticulum. The sequence is that of Matrix metalloproteinase-23 (MMP23B) from Homo sapiens (Human).